Here is a 187-residue protein sequence, read N- to C-terminus: Ribosome maturation factor RimP (187 aa).

The protein belongs to the RimP family.

It is found in the cytoplasm. In terms of biological role, required for maturation of 30S ribosomal subunits. The chain is Ribosome maturation factor RimP from Phenylobacterium zucineum (strain HLK1).